The chain runs to 1053 residues: Integrin alpha-3 (1053 aa).

The signal sequence occupies residues 1 to 32 (MGPGPCRVPRAPGWLLRALALMVAACGRVAFA). At 33–993 (FNLDTRFLVV…LVEELPAEIE (961 aa)) the chain is on the extracellular side. FG-GAP repeat units follow at residues 38–103 (RFLV…KDDC), 110–171 (EKSD…DLQL), 185–235 (CNSN…WDLS), 236–293 (EYSY…GGDL), 294–355 (QRKQ…ASFP), 357–412 (QPSL…GLLR), and 416–478 (QIIH…VARP). The N-linked (GlcNAc...) asparagine glycan is linked to Asn-86. 3 cysteine pairs are disulfide-bonded: Cys-94-Cys-103, Cys-140-Cys-162, and Cys-185-Cys-197. 2 cysteine pairs are disulfide-bonded: Cys-486-Cys-491 and Cys-497-Cys-551. Residues Asn-501, Asn-512, Asn-574, and Asn-606 are each glycosylated (N-linked (GlcNAc...) asparagine). A disulfide bridge connects residues Cys-616 and Cys-622. Asn-657, Asn-699, Asn-843, and Asn-859 each carry an N-linked (GlcNAc...) asparagine glycan. Cys-695 and Cys-704 are disulfide-bonded. 2 disulfide bridges follow: Cys-848/Cys-906 and Cys-913/Cys-918. Positions 865–890 (PGVTPLSPQRRRRQLDPGGDQSSPPV) are disordered. Asn-925, Asn-928, Asn-937, and Asn-971 each carry an N-linked (GlcNAc...) asparagine glycan. A helical transmembrane segment spans residues 994–1021 (LWLVLVAVGAGLLLLGLIILLLWKCGFF). The S-palmitoyl cysteine moiety is linked to residue Cys-1018. The Cytoplasmic segment spans residues 1022–1053 (KRARTRALYEAKRQKAEMKSQPSETERLTDDY).

Belongs to the integrin alpha chain family. In terms of assembly, heterodimer of an alpha and a beta subunit. The alpha subunit is composed of a heavy and a light chain linked by a disulfide bond. Alpha-3 associates with beta-1. Interacts with HPS5. Interacts with FAP (seprase); the interaction occurs at the cell surface of invadopodia membrane in a collagen-dependent manner. In terms of tissue distribution, isoform 1 and isoform 2 are expressed in heart and brain. Only isoform 1 is detected in lung.

The protein resides in the cell membrane. Its subcellular location is the cell projection. The protein localises to the invadopodium membrane. It is found in the filopodium membrane. Its function is as follows. Integrin alpha-3/beta-1 is a receptor for fibronectin, laminin, collagen, epiligrin, thrombospondin and CSPG4. Integrin alpha-3/beta-1 provides a docking site for FAP (seprase) at invadopodia plasma membranes in a collagen-dependent manner and hence may participate in the adhesion, formation of invadopodia and matrix degradation processes, promoting cell invasion. Alpha-3/beta-1 may mediate with LGALS3 the stimulation by CSPG4 of endothelial cells migration. The polypeptide is Integrin alpha-3 (Itga3) (Mus musculus (Mouse)).